Reading from the N-terminus, the 803-residue chain is Sensor histidine kinase CheAY (803 aa).

The residue at position 47 (His-47) is a Phosphohistidine. Disordered regions lie at residues 134–185 and 209–255; these read LESA…DEPD and EADK…ENKA. Basic and acidic residues-rich tracts occupy residues 136–166, 209–226, and 233–254; these read SAKE…ENKA, EADK…KPKQ, and ETPK…EENK. A Histidine kinase domain is found at 270–517; it reads RLDHLMNLIG…TQKLKIPLTL (248 aa). Position 273 is a phosphohistidine; by autocatalysis (His-273). In terms of domain architecture, CheW-like spans 519 to 653; that stretch reads IIQALLVGVQ…VGAMMDMAKS (135 aa). The Response regulatory domain occupies 678–796; that stretch reads IVLAIDDSST…YLTTVVKRSI (119 aa). At Asp-729 the chain carries 4-aspartylphosphate.

Autophosphorylated.

The enzyme catalyses ATP + protein L-histidine = ADP + protein N-phospho-L-histidine.. Member of the two-component regulatory system CheAY/CheY that regulates chemotaxis and colonization of the gastric mucosa. Functions as a sensor protein kinase which is autophosphorylated at a histidine residue and transfers its phosphate group to the conserved aspartic acid residue in the regulatory domain of CheY. In turn, phosphorylated CheY (CheY-P) interacts with the flagellar motor protein FliM to cause clockwise flagellar rotation and bacterial reversals, as opposed to straight swimming when CheY is not phosphorylated. The polypeptide is Sensor histidine kinase CheAY (cheAY) (Helicobacter pylori (strain ATCC 700392 / 26695) (Campylobacter pylori)).